Here is a 397-residue protein sequence, read N- to C-terminus: Enoyl-[acyl-carrier-protein] reductase [NADH] (397 aa).

NAD(+) is bound by residues 48 to 53, 74 to 75, 111 to 112, and 139 to 140; these read GASTGY, FE, DA, and VA. Tyrosine 225 contacts substrate. The active-site Proton donor is the tyrosine 235. Residues lysine 244 and 273–275 each bind NAD(+); that span reads VVT.

It belongs to the TER reductase family. As to quaternary structure, monomer.

It catalyses the reaction a 2,3-saturated acyl-[ACP] + NAD(+) = a (2E)-enoyl-[ACP] + NADH + H(+). Its pathway is lipid metabolism; fatty acid biosynthesis. In terms of biological role, involved in the final reduction of the elongation cycle of fatty acid synthesis (FAS II). Catalyzes the reduction of a carbon-carbon double bond in an enoyl moiety that is covalently linked to an acyl carrier protein (ACP). This chain is Enoyl-[acyl-carrier-protein] reductase [NADH], found in Burkholderia mallei (strain NCTC 10247).